Reading from the N-terminus, the 467-residue chain is MVTVRREKDSMGVIEVPADKLWGAQTQRSLEHFRISTEKMPVSLIHALALTKRAAAKVNQDLGLLAAEKASAIIEAADEVLAGKHADEFPLAIWQTGSGTQSNMNMNEVLANRASEILGGVRGMERKVHPNDDVNKSQSSNDVFPTAMHVAALLALREHLIPQLSALTDTLRDKSHAFADIVKIGRTHLQDATPLTLGQEISGWVAMLEHNLRHIEHSLPHVAELALGGTAVGTGLNTHPEYARRVAEELATITAAPFVTAPNKFEALATCDALVQAHGALKGLAASLMKIANDVRWLASGPRCGIGEIAIPENEPGSSIMPGKVNPTQCEAVTMLCCQVMGNDVAINMGGASGNFELNVYRPMVIHNFLQTVRLLADGMASFNQHCASGIEPNRERITQLLNESLMLVTALNTHIGYDKAAEIAKKAHKEGLTLKASAVALGYLSDAEFDAWVRPELMVGSMTPGR.

Substrate contacts are provided by residues 98 to 100 (SGT), R126, 129 to 132 (HPND), 139 to 141 (SSN), and T187. The Proton donor/acceptor role is filled by H188. Residue S318 is part of the active site. Residues S319 and 324 to 326 (KVN) contribute to the substrate site.

This sequence belongs to the class-II fumarase/aspartase family. Fumarase subfamily. In terms of assembly, homotetramer.

The protein localises to the cytoplasm. The enzyme catalyses (S)-malate = fumarate + H2O. It participates in carbohydrate metabolism; tricarboxylic acid cycle; (S)-malate from fumarate: step 1/1. Its function is as follows. Involved in the TCA cycle. Catalyzes the stereospecific interconversion of fumarate to L-malate. This Salmonella typhi protein is Fumarate hydratase class II.